The chain runs to 226 residues: 1-hydroxy-2-glutathionyl-2-methyl-3-butene dehydrogenase (226 aa).

Belongs to the short-chain dehydrogenases/reductases (SDR) family.

It carries out the reaction 2-glutathionyl-2-methylbut-3-en-1-ol + 2 NAD(+) + H2O = 2-glutathionyl-2-methylbut-3-enoate + 2 NADH + 3 H(+). The enzyme catalyses 2-glutathionyl-2-methylbut-3-en-1-ol + NAD(+) = 2-glutathionyl-2-methylbut-3-enal + NADH + H(+). The catalysed reaction is 2-glutathionyl-2-methylbut-3-enal + NAD(+) + H2O = 2-glutathionyl-2-methylbut-3-enoate + NADH + 2 H(+). Involved in isoprene degradation. Catalyzes the two-step NAD(+)-dependent oxidation of 2-glutathionyl-2-methylbut-3-en-1-ol (HGMB) to 2-glutathionyl-2-methylbut-3-enoate (GMBA). The sequence is that of 1-hydroxy-2-glutathionyl-2-methyl-3-butene dehydrogenase from Rhodococcus sp. (strain AD45).